Consider the following 1192-residue polypeptide: Coiled-coil domain-containing protein 40 (1192 aa).

Disordered stretches follow at residues 1–78 (MMDA…PGMD), 126–153 (KAKH…LEVS), 173–196 (SSPE…NVSA), 211–246 (EPIE…YQRD), and 261–289 (GSLT…STPR). Over residues 27-45 (PETEVEFIGETAPDTDVEF) the composition is skewed to acidic residues. Over residues 215–228 (PTEPPEPAEPPKPA) the composition is skewed to pro residues. Positions 267–279 (DTDDLPLETDEPP) are enriched in acidic residues. Position 306 is a phosphoserine (serine 306). Coiled coils occupy residues 308–369 (EALL…ATKQ), 425–451 (KTCQ…ALHL), 581–649 (DSEI…MLNK), 733–768 (NTNC…EIAR), 830–871 (LQQE…KIAH), 919–972 (LRTL…EMRS), and 1044–1118 (QQRE…IVTL).

This sequence belongs to the CCDC40 family. In terms of tissue distribution, specifically expressed in the embryonic node and midline.

The protein localises to the cytoplasm. It localises to the cell projection. The protein resides in the cilium. Its function is as follows. Required for assembly of dynein regulatory complex (DRC) and inner dynein arm (IDA) complexes, which are responsible for ciliary beat regulation, thereby playing a central role in motility in cilia and flagella. Probably acts together with CCDC39 to form a molecular ruler that determines the 96 nanometer (nm) repeat length and arrangements of components in cilia and flagella. Not required for outer dynein arm complexes assembly. Required for axonemal recruitment of CCDC39. This is Coiled-coil domain-containing protein 40 from Mus musculus (Mouse).